The sequence spans 646 residues: Cytochrome b translation regulator cbp8 (646 aa).

In terms of assembly, component of a complex, at least composed of cbp7 and cbp8.

It localises to the mitochondrion. Translation factor for cob1/cytochrome b; plays a role in cob1 mRNA stabilization and required for correct folding of the protein. This is Cytochrome b translation regulator cbp8 from Schizosaccharomyces pombe (strain 972 / ATCC 24843) (Fission yeast).